We begin with the raw amino-acid sequence, 568 residues long: Nitrite reductase (568 aa).

The N-terminal stretch at 1–25 is a signal peptide; that stretch reads MPFGKPLVGTLLASLTLLGLATAHA. An N-terminal tail region spans residues 26 to 54; that stretch reads KDDMKAAEQYQGAASAVDPAHVVRTNGAP. A Cytochrome c domain is found at 55 to 140; sequence DMSESEFNEA…AKYIQHTPPQ (86 aa). The heme c site is built by C72, C75, H76, R96, T109, and M113. Residues 141 to 568 are D1-heme domain; it reads PPEWGMPEMR…NVYNTQHDVY (428 aa). Positions 207, 250, 251, 270, 397, and 508 each coordinate heme d1.

As to quaternary structure, homodimer. The cofactor is heme c. It depends on heme as a cofactor.

The protein localises to the periplasm. The catalysed reaction is nitric oxide + Fe(III)-[cytochrome c] + H2O = Fe(II)-[cytochrome c] + nitrite + 2 H(+). It carries out the reaction A + NH4(+) + H2O = hydroxylamine + AH2 + H(+). The polypeptide is Nitrite reductase (nirS) (Pseudomonas aeruginosa (strain ATCC 15692 / DSM 22644 / CIP 104116 / JCM 14847 / LMG 12228 / 1C / PRS 101 / PAO1)).